Here is a 279-residue protein sequence, read N- to C-terminus: Orotidine 5'-phosphate decarboxylase (279 aa).

Substrate contacts are provided by residues D8, K30, 58-67 (DLKIHDIPNT), T117, R177, Q186, G206, and R207. K60 serves as the catalytic Proton donor.

The protein belongs to the OMP decarboxylase family. Type 1 subfamily. As to quaternary structure, homodimer.

The enzyme catalyses orotidine 5'-phosphate + H(+) = UMP + CO2. Its pathway is pyrimidine metabolism; UMP biosynthesis via de novo pathway; UMP from orotate: step 2/2. Its function is as follows. Catalyzes the decarboxylation of orotidine 5'-monophosphate (OMP) to uridine 5'-monophosphate (UMP). The chain is Orotidine 5'-phosphate decarboxylase from Campylobacter jejuni (strain RM1221).